Consider the following 386-residue polypeptide: Ovalbumin (386 aa).

G2 carries the post-translational modification N-acetylglycine. The not cleaved signal peptide spans H22–D48. The residue at position 69 (S69) is a Phosphoserine. The cysteines at positions 74 and 121 are disulfide-linked. E192 lines the Ca(2+) pocket. Residue N293 is glycosylated (N-linked (GlcNAc...) asparagine). S345 is subject to Phosphoserine.

Belongs to the serpin family. Ov-serpin subfamily. In terms of assembly, homodimer. In terms of processing, undergoes proteolytic cleavage first at the canonical P1-P1' site, and then at the P8-P7 site by subtilisin. In terms of tissue distribution, major protein of egg white. Expressed in the magnum of the oviduct (at protein level).

It localises to the secreted. Non-inhibitory serpin. Storage protein of egg white. In Gallus gallus (Chicken), this protein is Ovalbumin (SERPINB14).